We begin with the raw amino-acid sequence, 167 residues long: Arginine repressor (167 aa).

The protein belongs to the ArgR family.

It localises to the cytoplasm. The protein operates within amino-acid biosynthesis; L-arginine biosynthesis [regulation]. Regulates arginine biosynthesis genes. The sequence is that of Arginine repressor from Mycobacterium leprae (strain Br4923).